The following is a 60-amino-acid chain: Histidine-rich metal-binding polypeptide (60 aa).

Residues 1-60 (MAHHEEQHGGHHHHHHHTHHHHYHGGEHHHHHHSSHHEEGCCSTSDSHHQEEGCCHGHHE) form a disordered region. The segment covering 10–35 (GHHHHHHHTHHHHYHGGEHHHHHHSS) has biased composition (basic residues). Basic and acidic residues predominate over residues 36 to 60 (HHEEGCCSTSDSHHQEEGCCHGHHE). 2 consecutive repeat copies span residues 38 to 42 (EEGCC) and 51 to 55 (EEGCC). Residues 38–55 (EEGCCSTSDSHHQEEGCC) form a 2 X 5 AA repeats of E-E-G-C-C region.

In terms of biological role, strongly binds nickel and zinc. Binds other metals less strongly: cobalt &gt; copper &gt; cadmium &gt; manganese. May act to increase, or at least to preserve, urease activity. Exact function is still unknown. The sequence is that of Histidine-rich metal-binding polypeptide (hpn) from Helicobacter pylori (strain J99 / ATCC 700824) (Campylobacter pylori J99).